The primary structure comprises 338 residues: UDP-3-O-acylglucosamine N-acyltransferase (338 aa).

The active-site Proton acceptor is the histidine 243.

It belongs to the transferase hexapeptide repeat family. LpxD subfamily. As to quaternary structure, homotrimer.

It carries out the reaction a UDP-3-O-[(3R)-3-hydroxyacyl]-alpha-D-glucosamine + a (3R)-hydroxyacyl-[ACP] = a UDP-2-N,3-O-bis[(3R)-3-hydroxyacyl]-alpha-D-glucosamine + holo-[ACP] + H(+). It functions in the pathway bacterial outer membrane biogenesis; LPS lipid A biosynthesis. In terms of biological role, catalyzes the N-acylation of UDP-3-O-acylglucosamine using 3-hydroxyacyl-ACP as the acyl donor. Is involved in the biosynthesis of lipid A, a phosphorylated glycolipid that anchors the lipopolysaccharide to the outer membrane of the cell. In Amoebophilus asiaticus (strain 5a2), this protein is UDP-3-O-acylglucosamine N-acyltransferase.